The sequence spans 286 residues: Putative inorganic pyrophosphatase C3A12.02 (286 aa).

Position 85 (Arg85) interacts with diphosphate. Mg(2+) is bound by residues Asp122, Asp127, and Asp159.

The protein belongs to the PPase family. Mg(2+) is required as a cofactor.

The protein resides in the cytoplasm. The enzyme catalyses diphosphate + H2O = 2 phosphate + H(+). The sequence is that of Putative inorganic pyrophosphatase C3A12.02 from Schizosaccharomyces pombe (strain 972 / ATCC 24843) (Fission yeast).